A 192-amino-acid chain; its full sequence is Ion-translocating oxidoreductase complex subunit B (192 aa).

The hydrophobic stretch occupies residues 1 to 26; the sequence is MNAIWIAVAAVSLLGLAFGAILGYAS. The 4Fe-4S domain occupies 32–91; the sequence is EDDPVVEKIDEILPQSQCGQCGYPGCRPYAEAISCNGEKINRCAPGGEAVMLKIAELLNV. Residues cysteine 49, cysteine 52, cysteine 57, cysteine 74, cysteine 117, cysteine 120, cysteine 123, cysteine 127, cysteine 147, cysteine 150, cysteine 153, and cysteine 157 each contribute to the [4Fe-4S] cluster site. 4Fe-4S ferredoxin-type domains lie at 108–137 and 138–167; these read MVAVIDENNCIGCTKCIQACPVDAIVGATR and AMHTVMSDLCTGCNLCVDPCPTHCISLQPV.

The protein belongs to the 4Fe4S bacterial-type ferredoxin family. RnfB subfamily. In terms of assembly, the complex is composed of six subunits: RsxA, RsxB, RsxC, RsxD, RsxE and RsxG. [4Fe-4S] cluster serves as cofactor.

It is found in the cell inner membrane. In terms of biological role, part of a membrane-bound complex that couples electron transfer with translocation of ions across the membrane. Required to maintain the reduced state of SoxR. The sequence is that of Ion-translocating oxidoreductase complex subunit B from Escherichia coli O8 (strain IAI1).